The chain runs to 71 residues: UPF0337 protein RPA4418 (71 aa).

The segment at 1 to 54 (MGSTMDKIKGQANELAGKAKQGIGEATGSDKLKGEGAIQEAKGHGQQALGNAKD) is disordered.

The protein belongs to the UPF0337 (CsbD) family.

The chain is UPF0337 protein RPA4418 from Rhodopseudomonas palustris (strain ATCC BAA-98 / CGA009).